Consider the following 1758-residue polypeptide: Collagen alpha-2(IV) chain (1758 aa).

The first 26 residues, 1-26, serve as a signal peptide directing secretion; sequence MKQRAALGPVLRLAILALLAVSYVQS. Positions 27-42 are 7S domain; the sequence is QATCRDCSNRGCFCVG. Residues 42–1527 form a triple-helical region region; it reads GEKGSMGAPG…PGAPGAAGPA (1486 aa). The span at 47-62 shows a compositional bias: low complexity; that stretch reads MGAPGPQGPPGTQGIR. 4 disordered regions span residues 47–943, 955–1304, 1316–1339, and 1367–1525; these read MGAP…GAPG, GVPG…GLPG, GFPGAKGDLGANGIPGKRGEDGLP, and GFPG…GAAG. Positions 102 to 111 are enriched in gly residues; it reads GNDGGNGRPG. Over residues 134-149 the composition is skewed to pro residues; sequence PGRPGPPGMPGFPGPP. Residues 189-198 are compositionally biased toward basic and acidic residues; sequence YPGEKGDRGD. A compositionally biased stretch (low complexity) spans 224-234; sequence PKGDPGDLGSV. The O-linked (Xyl...) (glycosaminoglycan) serine glycan is linked to serine 248. A compositionally biased stretch (basic and acidic residues) spans 258–267; sequence PGEKGDKGEP. The span at 268–283 shows a compositional bias: gly residues; that stretch reads GEGGQRGYPGNGGLSG. The span at 367-382 shows a compositional bias: pro residues; it reads PGPPGLPGRPGNPGPP. The segment covering 398–407 has biased composition (gly residues); sequence GNTGGPGLPG. Composition is skewed to low complexity over residues 408 to 417 and 429 to 439; these read YPGNEGLPGP and APGVSGPSGIP. Basic and acidic residues predominate over residues 464–479; it reads KDGKPGLDGAPGRKGE. Composition is skewed to low complexity over residues 495 to 509 and 568 to 584; these read GLPGAPGQRGAPGPN and PVGDAGDDGLPGPAGRP. Residues 638-648 are compositionally biased toward pro residues; sequence PSGPVGPPGAP. Gly residues-rich tracts occupy residues 693 to 702, 737 to 746, and 782 to 791; these read GAKGDGGLPG, GTKGEGGYPG, and GDKGFGGVPG. The span at 839 to 858 shows a compositional bias: low complexity; the sequence is LPGLPGTPGLEGQRGFPGAP. The segment covering 859–868 has biased composition (gly residues); that stretch reads GLKGGDGLPG. Residues 929 to 938 are compositionally biased toward low complexity; the sequence is APGQSGAPGL. The span at 958-967 shows a compositional bias: gly residues; that stretch reads GFKGDGGLPG. The span at 968-980 shows a compositional bias: low complexity; the sequence is LPGLNGPKGEPGV. The segment covering 988-997 has biased composition (gly residues); the sequence is GMKGNGGLPG. The span at 1040 to 1056 shows a compositional bias: low complexity; sequence LPGQPGLRGPQGPSGLP. Residues 1194-1203 are compositionally biased toward gly residues; it reads GLPGLGGEKG. Residues 1237–1250 show a composition bias toward low complexity; the sequence is FPGQPGQEGLPGLS. A compositionally biased stretch (gly residues) spans 1251 to 1260; it reads GEKGMGGLPG. The segment covering 1373–1382 has biased composition (gly residues); that stretch reads GLKGEGGLPG. 2 stretches are compositionally biased toward low complexity: residues 1413 to 1425 and 1433 to 1454; these read LPGRDGLPGADGP and GPQNLVEPGEKGLPGLPGAPGL. 2 stretches are compositionally biased toward gly residues: residues 1492–1501 and 1507–1516; these read GEKGMGGLPG and GQPGGPGAPG. The region spanning 1531–1754 is the Collagen IV NC1 domain; the sequence is GFVLVKHSQT…SRCQVCVKST (224 aa). Cystine bridges form between cysteine 1546/cysteine 1635, cysteine 1579/cysteine 1632, cysteine 1591/cysteine 1597, cysteine 1654/cysteine 1750, cysteine 1688/cysteine 1747, and cysteine 1700/cysteine 1707.

It belongs to the type IV collagen family. Trimers of two alpha 1(IV) and one alpha 2(IV) chain. Type IV collagen forms a mesh-like network linked through intermolecular interactions between 7S domains and between NC1 domains. Prolines at the third position of the tripeptide repeating unit (G-X-Y) are hydroxylated in some or all of the chains. Post-translationally, type IV collagens contain numerous cysteine residues which are involved in inter- and intramolecular disulfide bonding. 12 of these, located in the NC1 domain, are conserved in all known type IV collagens. In terms of processing, the trimeric structure of the NC1 domains is stabilized by covalent bonds between Lys and Met residues. As to expression, localizes to the basement membrane between distal tip cells and the germline. Localizes to the intestinal basement membrane.

It is found in the secreted. Its subcellular location is the extracellular space. The protein resides in the extracellular matrix. It localises to the basement membrane. In terms of biological role, collagen type IV is specific for basement membranes. Together with fbl-1 and downstream of metalloprotease mig-17, recruits nidogen nid-1 to the gonad basement membrane thereby probably inducing basement membrane remodeling required for the directional migration of distal tip cells. Required to restrict presynaptic growth at the neuromuscular junctions in late larval stage and in adult motor neurons. Vital for embryonic development. The protein is Collagen alpha-2(IV) chain of Caenorhabditis elegans.